The following is a 136-amino-acid chain: Transcription antitermination protein NusB (136 aa).

Belongs to the NusB family.

Involved in transcription antitermination. Required for transcription of ribosomal RNA (rRNA) genes. Binds specifically to the boxA antiterminator sequence of the ribosomal RNA (rrn) operons. The chain is Transcription antitermination protein NusB from Paenarthrobacter aurescens (strain TC1).